The following is a 490-amino-acid chain: Subtilisin-like protease 8 (490 aa).

The signal sequence occupies residues 1–26; sequence MKGLLSLSVLPVLAYASPMIVDSIHQ. A propeptide spanning residues 27-134 is cleaved from the precursor; sequence NAAPILSSTN…YIERDSEVHT (108 aa). Residues 43-134 form the Inhibitor I9 domain; the sequence is SYIVVFKKGV…YIERDSEVHT (92 aa). The Peptidase S8 domain maps to 144-450; sequence PWGLARISHR…GGSDDYKKII (307 aa). Catalysis depends on charge relay system residues Asp-180 and His-212. Asn-282 is a glycosylation site (N-linked (GlcNAc...) asparagine). Catalysis depends on Ser-378, which acts as the Charge relay system. N-linked (GlcNAc...) asparagine glycosylation is present at Asn-456.

It belongs to the peptidase S8 family.

The protein localises to the secreted. In terms of biological role, secreted subtilisin-like serine protease with keratinolytic activity that contributes to pathogenicity. The protein is Subtilisin-like protease 8 (SUB8) of Trichophyton verrucosum (strain HKI 0517).